Reading from the N-terminus, the 205-residue chain is Putative STAG3-like protein 1 (205 aa).

The SCD domain occupies 10–95 (PKVTCRDVLP…GRFKDWMVSM (86 aa)).

This sequence belongs to the SCC3 family.

It is found in the nucleus. This chain is Putative STAG3-like protein 1 (STAG3L1), found in Homo sapiens (Human).